Consider the following 411-residue polypeptide: DSEFAELKIRGKIFKLPILKASIGEDVIDISRVSAEADCFTYDPGFMSTASCQSTITYIDGDKGILRHRGYDIKDLAEKSDFLEVAYLLIYGELPSGEQYNNFTKQVAHHSLVNERLHYLFQTFCSSSHPMAIMLAAVGSLSAFYPDLLNFKEADYELTAIRMIAKIPTIAAMSYKYSIGQPFIYPDNPLDFTENFLHMMFATPCTKYTVNPIIKNALNKIFILHADHEQNASTSTVRIAGSSGANPFACISTGIASLWGPAHGGANEAVINMLKEIGSSEYIPKYIAKAKDKNDPFRLMGFGHRVYKNYDPRAAVLKETCKEVLKALGQLDNNPLLQIAIELEAIALKDEYFIERKLYPNVDFYSGIIYKAMGIPSQMFTVLFAIARTVGWMAQWKEMHEDPEQKISRPR.

Catalysis depends on residues H304 and D363.

This sequence belongs to the citrate synthase family.

The enzyme catalyses oxaloacetate + acetyl-CoA + H2O = citrate + CoA + H(+). It functions in the pathway carbohydrate metabolism; tricarboxylic acid cycle; isocitrate from oxaloacetate: step 1/2. This is Citrate synthase (gltA) from Rickettsia conorii subsp. caspia (strain A-167) (Astrakhan rickettsia).